A 47-amino-acid polypeptide reads, in one-letter code: MRKIPLNCEACGNRNYNVPKQEGSATRLTLKKYCPKCNAHTIHKESK.

This sequence belongs to the bacterial ribosomal protein bL33 family.

This chain is Large ribosomal subunit protein bL33A, found in Staphylococcus aureus (strain JH1).